A 65-amino-acid chain; its full sequence is Large ribosomal subunit protein bL35 (65 aa).

This sequence belongs to the bacterial ribosomal protein bL35 family.

This is Large ribosomal subunit protein bL35 from Desulforapulum autotrophicum (strain ATCC 43914 / DSM 3382 / VKM B-1955 / HRM2) (Desulfobacterium autotrophicum).